The sequence spans 665 residues: Prelamin-A/C (665 aa).

Met-1 carries the N-acetylmethionine modification. The interval 1–27 (METPSQRRPTRSGAQASSTPLSPTRIT) is disordered. A head region spans residues 1–33 (METPSQRRPTRSGAQASSTPLSPTRITRLQEKE). An interaction with MLIP region spans residues 1–130 (METPSQRRPT…TKKEGDLLAA (130 aa)). At Thr-3 the chain carries Phosphothreonine. Ser-5 bears the Phosphoserine mark. At Thr-10 the chain carries Phosphothreonine. Phosphoserine is present on residues Ser-12 and Ser-18. At Thr-19 the chain carries Phosphothreonine. Residue Ser-22 is modified to Phosphoserine. One can recognise an IF rod domain in the interval 31-387 (EKEDLQELND…KLLEGEEERL (357 aa)). Lys-32 is subject to N6-acetyllysine; alternate. Lys-32 carries the N6-succinyllysine; alternate modification. Lys-32 is covalently cross-linked (Glycyl lysine isopeptide (Lys-Gly) (interchain with G-Cter in SUMO2); alternate). The tract at residues 34 to 70 (DLQELNDRLAVYIDRVRSLETENAGLRLRITESEEVV) is coil 1A. A phosphoserine mark is found at Ser-51, Ser-66, and Ser-71. The tract at residues 71–80 (SREVSGIKAA) is linker 1. N6-acetyllysine is present on residues Lys-78 and Lys-97. Residues 81 to 218 (YEAELGDARK…NIYSEELRET (138 aa)) form a coil 1B region. Residue Lys-97 forms a Glycyl lysine isopeptide (Lys-Gly) (interchain with G-Cter in SUMO2) linkage. Ser-107 carries the phosphoserine modification. Lys-108, Lys-114, Lys-123, Lys-135, Lys-144, and Lys-155 each carry N6-acetyllysine. Residue Lys-171 is modified to N6-acetyllysine; alternate. The residue at position 171 (Lys-171) is an N6-succinyllysine; alternate. Lys-171 is covalently cross-linked (Glycyl lysine isopeptide (Lys-Gly) (interchain with G-Cter in SUMO2); alternate). N6-acetyllysine occurs at positions 180, 201, and 208. Lys-201 participates in a covalent cross-link: Glycyl lysine isopeptide (Lys-Gly) (interchain with G-Cter in SUMO2); alternate. Residue Lys-201 forms a Glycyl lysine isopeptide (Lys-Gly) (interchain with G-Cter in SUMO); alternate linkage. Residue Lys-208 forms a Glycyl lysine isopeptide (Lys-Gly) (interchain with G-Cter in SUMO2) linkage. Ser-212 is subject to Phosphoserine. Glycyl lysine isopeptide (Lys-Gly) (interchain with G-Cter in SUMO2) cross-links involve residues Lys-219 and Lys-233. Residues 219-242 (KRRHETRLVEIDNGKQREFESRLA) are linker 2. N6-acetyllysine occurs at positions 233, 260, 265, and 270. A coil 2 region spans residues 243-383 (DALQELRAQH…HAYRKLLEGE (141 aa)). Lys-260 is covalently cross-linked (Glycyl lysine isopeptide (Lys-Gly) (interchain with G-Cter in SUMO2); alternate). Residue Lys-270 forms a Glycyl lysine isopeptide (Lys-Gly) (interchain with G-Cter in SUMO2); alternate linkage. 4 positions are modified to phosphoserine: Ser-277, Ser-282, Ser-301, and Ser-307. Residue Lys-311 forms a Glycyl lysine isopeptide (Lys-Gly) (interchain with G-Cter in SUMO2); alternate linkage. 3 positions are modified to N6-acetyllysine: Lys-311, Lys-316, and Lys-341. Glycyl lysine isopeptide (Lys-Gly) (interchain with G-Cter in SUMO2) cross-links involve residues Lys-366 and Lys-378. A disordered region spans residues 384-442 (EERLRLSPSPTSQRSRGRASSHSSQSQGGGSVTKKRKLESSESRSSFSQHARTSGRVAV). The interval 384-665 (EERLRLSPSP…TQSSQNCSIM (282 aa)) is tail. Phosphoserine occurs at positions 390, 392, 395, 398, 403, 404, 406, 407, 409, and 414. Low complexity predominate over residues 395–409 (SQRSRGRASSHSSQS). Thr-416 carries the phosphothreonine modification. Lys-417 carries the post-translational modification N6-acetyllysine. Residues Lys-417 and Lys-420 each participate in a glycyl lysine isopeptide (Lys-Gly) (interchain with G-Cter in SUMO2) cross-link. The Nuclear localization signal signature appears at 417-422 (KKRKLE). Ser-423, Ser-426, Ser-429, and Ser-431 each carry phosphoserine. Residues 428–545 (SSFSQHARTS…EEVAMRKLVR (118 aa)) enclose the LTD domain. Lys-450 is covalently cross-linked (Glycyl lysine isopeptide (Lys-Gly) (interchain with G-Cter in SUMO2); alternate). 2 positions are modified to N6-acetyllysine: Lys-450 and Lys-457. A phosphoserine mark is found at Ser-458 and Ser-463. Glycyl lysine isopeptide (Lys-Gly) (interchain with G-Cter in SUMO2) cross-links involve residues Lys-470 and Lys-486. At Lys-486 the chain carries N6-acetyllysine. Phosphothreonine is present on Thr-496. Position 500 is a phosphoserine (Ser-500). A phosphothreonine mark is found at Thr-505 and Thr-510. Ser-546 carries the post-translational modification Phosphoserine. A Phosphothreonine modification is found at Thr-548. Positions 552-561 (DNDDEEEDGD) are enriched in acidic residues. Positions 552–577 (DNDDEEEDGDELLHHHRGSHCSSSGD) are disordered. A phosphoserine mark is found at Ser-570 and Ser-573. Residue Lys-599 forms a Glycyl lysine isopeptide (Lys-Gly) (interchain with G-Cter in SUMO2); alternate linkage. Lys-599 is covalently cross-linked (Glycyl lysine isopeptide (Lys-Gly) (interchain with G-Cter in SUMO1); alternate). A phosphoserine mark is found at Ser-613, Ser-614, Ser-617, and Ser-620. Ser-626 and Ser-629 each carry an O-linked (GlcNAc) serine glycan. Phosphoserine occurs at positions 629, 633, 637, and 653. Residues 648 to 662 (LLGNSSPRTQSSQNC) constitute a propeptide, removed in Lamin-A/C form. Residue Cys-662 is modified to Cysteine methyl ester. Cys-662 carries the S-farnesyl cysteine lipid modification. Residues 663-665 (SIM) constitute a propeptide, removed in Prelamin-A/C form and in Lamin-A/C form.

It belongs to the intermediate filament family. As to quaternary structure, homodimer of lamin A and lamin C. Lamin dimers then assemble into dimeric head-to-tail polymers. Ultimately, two head-to-tail polymers assemble laterally into a protofilament with a uniformly shaped rod of 3.5 nm in diameter. Interacts with lamin-associated polypeptides IA, IB and TMPO-alpha, RB1 and with emerin. Interacts with SREBF1, SREBF2, SUN2 and TMEM43. Interacts with TMEM201. Proteolytically processed isoform A interacts with NARF. Interacts with SUN1. Interacts with MLIP. Interacts with DMPK; may regulate nuclear envelope stability. Interacts with SUV39H1; the interaction increases stability of SUV39H1. Interacts with SYNE2. Interacts with ITSN1 isoform 2. Interacts with IFFO1; enables the formation of an interior nucleoskeleton that is recruited to DNA double-strand breaks. In terms of assembly, interacts with EMD. Interacts (via C-terminus) with LEMD2 (via N-terminus) (in vitro). Proteolytic cleavage of the C-terminal of 18 residues of prelamin-A/C results in the production of lamin-A/C. The prelamin-A/C maturation pathway includes farnesylation of CAAX motif by protein farnesyltransferase (FNTA and FNTB), removal of the last three amino acids (-AAX) by RCE1/FACE2 and/or ZMPSTE24, methylation of the C-terminal cysteine by ICMT and endoproteolytic removal of the last 15 C-terminal amino acids by ZMPSTE24. Proteolytic cleavage requires prior farnesylation and methylation, and absence of these blocks cleavage. Post-translationally, farnesylation of prelamin-A/C facilitates nuclear envelope targeting. In terms of processing, phosphorylation plays a key role in lamin organization, subcellular localization and nuclear envelope disintegration. Phosphorylation by CDK1 at Ser-22 and Ser-392 at the onset of mitosis drives lamin disassembly and nuclear envelope breakdown. Phosphorylation at Ser-22 and Ser-392 during interphase promotes localization to the nucleoplasm and regulates lamina assembly. Phosphorylation at Ser-22, Ser-392 and Ser-629 during interphase causes redistribution between the nucleus and the cytoplasm. Phosphorylation at Ser-22 by CDK1 regulates matrix stiffness. Phosphorylation status of Ser-22 determines its localization between double-strand break (DSB) sites and the nuclear matrix. Phosphorylated by ATR at Ser-282 in response to DNA damage, leading to lamin disassembly and nuclear envelope rupture. Phosphorylation also regulates stability in micronuclei arising from genome instability: phosphorylation at Ser-395 by ATR in response to genome instability and double-stranded DNA breaks primes LMNA for subsequent phosphorylation at Ser-392 by CDK1 and micronuclei envelope rupture. The rupture of micronuclear envelope triggers the cGAS-STING pathway thereby activating the type I interferon response and innate immunity. Acetylation by KAT8 is required for nuclear architecture. Post-translationally, sumoylation is necessary for the localization to the nuclear envelope.

The protein resides in the nucleus lamina. It localises to the nucleus envelope. It is found in the nucleus. Its subcellular location is the nucleoplasm. The protein localises to the nucleus matrix. Its function is as follows. Lamins are intermediate filament proteins that assemble into a filamentous meshwork, and which constitute the major components of the nuclear lamina, a fibrous layer on the nucleoplasmic side of the inner nuclear membrane. Lamins provide a framework for the nuclear envelope, bridging the nuclear envelope and chromatin, thereby playing an important role in nuclear assembly, chromatin organization, nuclear membrane and telomere dynamics. Lamin A and C also regulate matrix stiffness by conferring nuclear mechanical properties. The structural integrity of the lamina is strictly controlled by the cell cycle, as seen by the disintegration and formation of the nuclear envelope in prophase and telophase, respectively. Lamin A and C are present in equal amounts in the lamina of mammals. Also invoved in DNA repair: recruited by DNA repair proteins XRCC4 and IFFO1 to the DNA double-strand breaks (DSBs) to prevent chromosome translocation by immobilizing broken DNA ends. Required for normal development of peripheral nervous system and skeletal muscle and for muscle satellite cell proliferation. Required for osteoblastogenesis and bone formation. Also prevents fat infiltration of muscle and bone marrow, helping to maintain the volume and strength of skeletal muscle and bone. Required for cardiac homeostasis. Functionally, prelamin-A/C can accelerate smooth muscle cell senescence. It acts to disrupt mitosis and induce DNA damage in vascular smooth muscle cells (VSMCs), leading to mitotic failure, genomic instability, and premature senescence. This Rattus norvegicus (Rat) protein is Prelamin-A/C (Lmna).